Here is a 271-residue protein sequence, read N- to C-terminus: Undecaprenyl-diphosphatase 2 (271 aa).

8 consecutive transmembrane segments (helical) span residues methionine 1–isoleucine 21, asparagine 46–phenylalanine 66, alanine 88–isoleucine 108, alanine 111–phenylalanine 131, leucine 146–phenylalanine 166, serine 190–isoleucine 210, leucine 220–methionine 240, and methionine 251–isoleucine 271.

Belongs to the UppP family.

The protein localises to the cell membrane. It carries out the reaction di-trans,octa-cis-undecaprenyl diphosphate + H2O = di-trans,octa-cis-undecaprenyl phosphate + phosphate + H(+). Catalyzes the dephosphorylation of undecaprenyl diphosphate (UPP). Confers resistance to bacitracin. The polypeptide is Undecaprenyl-diphosphatase 2 (Oenococcus oeni (strain ATCC BAA-331 / PSU-1)).